A 340-amino-acid polypeptide reads, in one-letter code: Putative methionyl-tRNA formyltransferase (340 aa).

It belongs to the Fmt family.

Its subcellular location is the mitochondrion. It localises to the mitochondrion matrix. The protein resides in the cytoplasm. The enzyme catalyses L-methionyl-tRNA(fMet) + (6R)-10-formyltetrahydrofolate = N-formyl-L-methionyl-tRNA(fMet) + (6S)-5,6,7,8-tetrahydrofolate + H(+). In terms of biological role, formylates methionyl-tRNA in mitochondria and the cytoplasm. Responsible for the formylation of the N-terminally formylated (Nt-formylated) mitochondrial matrix proteins that are encoded by mitochondrial DNA. Nt-formylated proteins in the cytoplasm are strongly up-regulated in stationary phase or upon starvation for specific amino acids and are targeted for degradation by an E3 ubiquitin ligase-mediated fMet/N-end rule pathway. Increased Nt-formylation of cytosolic proteins appears to be important for adaptation to these stresses. The protein is Putative methionyl-tRNA formyltransferase (fmt1) of Schizosaccharomyces pombe (strain 972 / ATCC 24843) (Fission yeast).